We begin with the raw amino-acid sequence, 184 residues long: Large ribosomal subunit protein uL6 (184 aa).

The protein belongs to the universal ribosomal protein uL6 family. In terms of assembly, part of the 50S ribosomal subunit.

Its function is as follows. This protein binds to the 23S rRNA, and is important in its secondary structure. It is located near the subunit interface in the base of the L7/L12 stalk, and near the tRNA binding site of the peptidyltransferase center. The protein is Large ribosomal subunit protein uL6 of Thermotoga neapolitana (strain ATCC 49049 / DSM 4359 / NBRC 107923 / NS-E).